Consider the following 160-residue polypeptide: 6,7-dimethyl-8-ribityllumazine synthase (160 aa).

Residues Trp-27, 59 to 61 (AIE), and 81 to 83 (VVI) contribute to the 5-amino-6-(D-ribitylamino)uracil site. 86–87 (QT) serves as a coordination point for (2S)-2-hydroxy-3-oxobutyl phosphate. His-89 acts as the Proton donor in catalysis. Asn-114 contributes to the 5-amino-6-(D-ribitylamino)uracil binding site. Residue Arg-128 coordinates (2S)-2-hydroxy-3-oxobutyl phosphate.

This sequence belongs to the DMRL synthase family. As to quaternary structure, homopentamer.

The enzyme catalyses (2S)-2-hydroxy-3-oxobutyl phosphate + 5-amino-6-(D-ribitylamino)uracil = 6,7-dimethyl-8-(1-D-ribityl)lumazine + phosphate + 2 H2O + H(+). Its pathway is cofactor biosynthesis; riboflavin biosynthesis; riboflavin from 2-hydroxy-3-oxobutyl phosphate and 5-amino-6-(D-ribitylamino)uracil: step 1/2. Its function is as follows. Catalyzes the formation of 6,7-dimethyl-8-ribityllumazine by condensation of 5-amino-6-(D-ribitylamino)uracil with 3,4-dihydroxy-2-butanone 4-phosphate. This is the penultimate step in the biosynthesis of riboflavin. The chain is 6,7-dimethyl-8-ribityllumazine synthase (ribH) from Mycobacterium tuberculosis (strain CDC 1551 / Oshkosh).